Here is a 457-residue protein sequence, read N- to C-terminus: MAQRVGEEEQGASGLRRRRSGARCVEARERDEQVREVQEMLQRGLSSYEPVLSYVQAVLVWERPRHSALLHLALNAAFWFFALTSLRIIFLVAFGLMIIICADQWKNKLWPELGAARASELENESWGYVHPRLLSVPELCYHAADTWVSVYNFLRNLLLFKTENPGKFCLLACSFLTFLAVLGGYIPGVVLSYLLLLFLLLWPLAIYHQLGRRIYQKLEPALQRLDFSVRGYMMSKYKERQKHNRALPPTDASDSEEELAAFCPSLDDSAVAKELTISDSEHSDAEVSFTENGTFNLSRGQTPLTEGSEDLDRHSDPEESFARDLPDFPSINPDATGIEDDDETSIGIPSTALHPQFSSRQLYEEQESLDAELSLGGFPSTQNITENIAGFVTRGMIQLALAGASQQTHAYAESPRAKQYQRNSSSELDTDAEADDFELLDQSELSQMDPSSSHSHQ.

Residues 1-24 (MAQRVGEEEQGASGLRRRRSGARC) form a disordered region. A run of 3 helical transmembrane segments spans residues 80–100 (FFAL…MIII), 165–185 (PGKF…LGGY), and 186–206 (IPGV…PLAI). Residues 291-305 (ENGTFNLSRGQTPLT) are compositionally biased toward polar residues. 2 disordered regions span residues 291–351 (ENGT…IPST) and 410–457 (AYAE…HSHQ). Residues 310–326 (DLDRHSDPEESFARDLP) are compositionally biased toward basic and acidic residues. The segment covering 428–441 (LDTDAEADDFELLD) has biased composition (acidic residues). The LIR motif motif lies at 435–440 (DDFELL). A compositionally biased stretch (polar residues) spans 443-457 (SELSQMDPSSSHSHQ).

This sequence belongs to the RETREG family. In terms of assembly, interacts with ATG8 family modifier proteins.

The protein localises to the endoplasmic reticulum membrane. Functionally, endoplasmic reticulum (ER)-anchored autophagy regulator which exists in an inactive state under basal conditions but is activated following cellular stress. When activated, induces ER fragmentation and mediates ER delivery into lysosomes through sequestration into autophagosomes via interaction with ATG8 family proteins. Promotes ER membrane curvature and ER tubulation required for subsequent ER fragmentation and engulfment into autophagosomes. This chain is Reticulophagy regulator 3 (retreg3), found in Xenopus tropicalis (Western clawed frog).